The following is a 98-amino-acid chain: Large ribosomal subunit protein uL23 (98 aa).

This sequence belongs to the universal ribosomal protein uL23 family. As to quaternary structure, part of the 50S ribosomal subunit. Contacts protein L29, and trigger factor when it is bound to the ribosome.

One of the early assembly proteins it binds 23S rRNA. One of the proteins that surrounds the polypeptide exit tunnel on the outside of the ribosome. Forms the main docking site for trigger factor binding to the ribosome. The protein is Large ribosomal subunit protein uL23 of Cellvibrio japonicus (strain Ueda107) (Pseudomonas fluorescens subsp. cellulosa).